Here is a 271-residue protein sequence, read N- to C-terminus: MPQGYLQFPNIDPVLFSIGPLAVRWYGLMYLVGFLFAMWLANRRADRAGSGWTREQVSDLLFAGFLGVVIGGRVGYVIFYNFDLFLADPLYLFKVWTGGMSFHGGLLGVITAMFWYARKNQRTFFGVADFVAPLVPFGLGMGRIGNFMNSELWGRVTDVPWAFVFPNGGPLPRHPSQLYEFALEGVVLFFILNWFIGKPRPLGSVSGLFLAGYGTFRFLVEYVREPDAQLGLFGGFISMGQILSLPMVIIGILMMVWSYKRGLYQDRVAAK.

A run of 7 helical transmembrane segments spans residues 21–41 (LAVRWYGLMYLVGFLFAMWLA), 60–80 (LLFAGFLGVVIGGRVGYVIFY), 95–115 (VWTGGMSFHGGLLGVITAMFW), 124–144 (FFGVADFVAPLVPFGLGMGRI), 177–197 (QLYEFALEGVVLFFILNWFIG), 203–223 (GSVSGLFLAGYGTFRFLVEYV), and 236–256 (FISMGQILSLPMVIIGILMMV). Residue arginine 143 coordinates a 1,2-diacyl-sn-glycero-3-phospho-(1'-sn-glycerol).

This sequence belongs to the Lgt family.

The protein localises to the cell inner membrane. It catalyses the reaction L-cysteinyl-[prolipoprotein] + a 1,2-diacyl-sn-glycero-3-phospho-(1'-sn-glycerol) = an S-1,2-diacyl-sn-glyceryl-L-cysteinyl-[prolipoprotein] + sn-glycerol 1-phosphate + H(+). It functions in the pathway protein modification; lipoprotein biosynthesis (diacylglyceryl transfer). Functionally, catalyzes the transfer of the diacylglyceryl group from phosphatidylglycerol to the sulfhydryl group of the N-terminal cysteine of a prolipoprotein, the first step in the formation of mature lipoproteins. The polypeptide is Phosphatidylglycerol--prolipoprotein diacylglyceryl transferase (Vibrio cholerae serotype O1 (strain ATCC 39541 / Classical Ogawa 395 / O395)).